Reading from the N-terminus, the 15281-residue chain is Cyclosporin synthetase simA (15281 aa).

Residues 34 to 463 form a condensation 1 region; sequence SFAQGRLWFL…AVHVKTMPLT (430 aa). The adenylation 1 stretch occupies residues 513 to 918; the sequence is SYSELDHKSD…NSDQVRDAAV (406 aa). The Carrier 1 domain occupies 1026–1100; that stretch reads APRNEIEAVL…DLAATIQRGS (75 aa). Ser-1060 carries the O-(pantetheine 4'-phosphoryl)serine modification. Residues 1118 to 1549 are condensation 2; sequence SFAQGRLWFL…QTPIMTMPLT (432 aa). The segment at 1599–2004 is adenylation 2; that stretch reads SYAELDQRSD…SSAGVHDAVV (406 aa). A methyltransferase (M) domain 1 region spans residues 2067–2251; the sequence is SWTSMYDGTL…LEELEEELLV (185 aa). In terms of domain architecture, Carrier 2 spans 2524–2598; it reads APRDSIEAII…DLAATIQQDT (75 aa). Position 2558 is an O-(pantetheine 4'-phosphoryl)serine (Ser-2558). The condensation 3 stretch occupies residues 2616–3044; the sequence is SFAQGRLWFL…EPDMPVASMA (429 aa). The adenylation 3 stretch occupies residues 3096 to 3498; that stretch reads SYADLDRKSD…SHDLVTDAAV (403 aa). Positions 3562–3749 are methyltransferase (M) domain 2; the sequence is SMYDGSLIKK…EDELLVDPAF (188 aa). The region spanning 4011 to 4085 is the Carrier 3 domain; it reads APRTEIERVL…DLVLIVQQGS (75 aa). Position 4045 is an O-(pantetheine 4'-phosphoryl)serine (Ser-4045). The segment at 4100 to 4530 is condensation 4; the sequence is VPQSFAQGRL…GPDVPISTLP (431 aa). Residues 4582-4986 form an adenylation 4 region; the sequence is SYAQLDRESD…FLNDGFVEDV (405 aa). The tract at residues 5052–5241 is methyltransferase (M) domain 3; sequence TSMYDGTEID…ELLVDPAFFT (190 aa). Residues 5503-5577 form the Carrier 4 domain; it reads PPRNSVEATV…DLAAVIQRNS (75 aa). Ser-5537 is modified (O-(pantetheine 4'-phosphoryl)serine). The tract at residues 5592–6023 is condensation 5; that stretch reads VPQSFAQGRL…QPLTPLAVLP (432 aa). The interval 6075–6478 is adenylation 5; it reads TYAQLDQQSD…SHNSVQDAAV (404 aa). The interval 6545-6729 is methyltransferase (M) domain 4; the sequence is WTSMYDGSEI…ELEANEEELL (185 aa). Residues 7000 to 7074 form the Carrier 5 domain; that stretch reads APRNEIEAIL…DLAASIQRES (75 aa). Ser-7034 bears the O-(pantetheine 4'-phosphoryl)serine mark. Residues 7092-7517 are condensation 6; the sequence is SFAQGRLWFL…VLDQPLTPIS (426 aa). The segment at 7572-7976 is adenylation 6; that stretch reads TYAQLDEQSD…DHKSVLAATV (405 aa). The Carrier 6 domain maps to 8060–8134; sequence PPRDEVEAVL…DLADIIRRGS (75 aa). The residue at position 8094 (Ser-8094) is an O-(pantetheine 4'-phosphoryl)serine. A condensation 7 region spans residues 8152-8582; the sequence is SFAQGRLWFL…PKQRLMAMPI (431 aa). Residues 8633–9038 form an adenylation 7 region; that stretch reads TYADLDGQSN…GHDLVHDAAV (406 aa). Residues 9111–9288 form a methyltransferase (M) domain 5 region; it reads PVNEMKEWLD…EESEEELLVD (178 aa). The 75-residue stretch at 9555-9629 folds into the Carrier 7 domain; sequence APRNDTEIVL…DLAASIEQGS (75 aa). Ser-9589 is subject to O-(pantetheine 4'-phosphoryl)serine. Residues 9647–10077 form a condensation 8 region; it reads SYAQGRLWFL…QVSISTMPLT (431 aa). Positions 10127 to 10529 are adenylation 8; it reads SYTSLDQKSE…GNKAIHDAAV (403 aa). A methyltransferase (M) domain 6 region spans residues 10588–10768; it reads RDFTSWTSMY…DQIRQEVARL (181 aa). Residues 11052-11126 enclose the Carrier 8 domain; sequence APRNDIEAVL…DLADVVQTGS (75 aa). Ser-11086 carries the O-(pantetheine 4'-phosphoryl)serine modification. The interval 11144–11567 is condensation 9; it reads SFSQGRLWFL…HANLATLPLT (424 aa). The tract at residues 11616–12019 is adenylation 9; that stretch reads TYTELDERSS…RDPAISDSAV (404 aa). The Carrier 9 domain maps to 12124–12198; the sequence is APRNDIETII…QLAASIQQGS (75 aa). Ser-12158 bears the O-(pantetheine 4'-phosphoryl)serine mark. Residues 12216 to 12645 form a condensation 10 region; that stretch reads SFAQGRLWFL…IAISTMPLVD (430 aa). Positions 12696 to 13096 are adenylation 10; sequence TYAELDQQSD…SDSSINDAVV (401 aa). Residues 13162-13343 form a methyltransferase (M) domain 7 region; that stretch reads YDGSLIPREE…EDDEEELLVD (182 aa). The region spanning 13620-13694 is the Carrier 10 domain; that stretch reads APRTEIEVVL…DLAASILQGS (75 aa). Ser-13654 carries the post-translational modification O-(pantetheine 4'-phosphoryl)serine. Residues 13710–14143 are condensation 11; the sequence is EQSFAQGRLW…PQSPIATMPL (434 aa). The interval 14194-14598 is adenylation 11; sequence TYAELDRLSD…SENSVTDAAV (405 aa). The 75-residue stretch at 14695–14769 folds into the Carrier 11 domain; it reads APRNETEAAI…SLAGKLEQQQ (75 aa). O-(pantetheine 4'-phosphoryl)serine is present on Ser-14729. The condensation 12 stretch occupies residues 14814 to 15158; sequence DMYPATQTQI…HPEAEIEGQQ (345 aa). The disordered stretch occupies residues 15169–15224; sequence QARQANGHAPNGTNGTNGTNGTNGANGTNGTNGTNGTHANGINGSNGVNGRDSNVV. Residues 15173 to 15211 show a composition bias toward low complexity; the sequence is ANGHAPNGTNGTNGTNGTNGANGTNGTNGTNGTHANGIN. Residues 15213 to 15224 show a composition bias toward polar residues; sequence SNGVNGRDSNVV.

The protein belongs to the NRP synthetase family. Pantetheine 4'-phosphate serves as cofactor.

In terms of biological role, nonribosomal peptide synthetase; part of the gene cluster that mediates the biosynthesis of the cycloundecapeptide cyclosporin A (CsA), a compound with antifungal activity used as an immunosuppressant drug. Cyclosporin A contains three non-proteinogenic amino acids: D-alanine, alpha-amino butyric acid and the unusual amino acid (4R)-4-[(E)-2-butenyl]-4-methyl-l-threonine (Bmt). The nonribosomal peptide synthetase (NRPS) catalyzes the elongation and cyclization of the undecapeptide chain. SimA contains 11 modules responsible for sequential uptake of substrates and chain elongation. In addition to the core condensation-adenylation-thiolation (C-A-T) domains present in each module, seven modules contain an additional N-methylation (M) domain (modules 2, 3, 4, 5, 7, 8, and 10). The terminal C domain (C12 or Ct) is implicated in cyclization of the peptidyl chains to form CsA. The first module (A1) takes up D-Ala which is provided by the alanine racemase simB. The A2, A3, A8, and A10 domains have the same substrate-specific signature for recognition of leucine residues. The unusual amino acid (4R)-4-[(E)-2-butenyl]-4-methyl-l-threonine (Bmt) is recognized by the fifth module (A5). The A11 domain recognizes L-Ala. The PKS simG mediates the biosynthesis of 3R-hydroxyl-4R-methyl-6E-octenoic acid from acetyl coenzyme A (acetyl-CoA), malonyl-CoA, and S-adenosylmethionine, and 3R-hydroxyl-4R-methyl-6E-octenoic acid is then be repeatedly oxidized by simI to 3R-hydroxy-4R-methyl-2-keto-6E-octenoic acid. The latter is likely converted to Bmt through the action of the aminotransferase SimJ. This is Cyclosporin synthetase simA from Tolypocladium inflatum (Cyclosporin fungus).